The chain runs to 129 residues: Keratin-associated protein 5-6 (129 aa).

6 tandem repeats follow at residues 28 to 31 (CCVP), 34 to 37 (CCKP), 40 to 43 (CCVP), 90 to 93 (CCKP), 109 to 112 (CCKP), and 119 to 122 (CCVP). The interval 28 to 112 (CCVPICCCKP…SCCQSSCCKP (85 aa)) is 6 X 4 AA repeats of C-C-X-P.

Belongs to the KRTAP type 5 family. Interacts with hair keratins. In terms of tissue distribution, expressed in hair root and not in skin. Expressed also in liver and skeletal muscle.

In terms of biological role, in the hair cortex, hair keratin intermediate filaments are embedded in an interfilamentous matrix, consisting of hair keratin-associated protein (KRTAP), which are essential for the formation of a rigid and resistant hair shaft through their extensive disulfide bond cross-linking with abundant cysteine residues of hair keratins. The matrix proteins include the high-sulfur and high-glycine-tyrosine keratins. The sequence is that of Keratin-associated protein 5-6 (KRTAP5-6) from Homo sapiens (Human).